The sequence spans 194 residues: Holliday junction branch migration complex subunit RuvA (194 aa).

Residues 1–61 (MYDFLTGIIK…DNQISLYGFK (61 aa)) are domain I. The domain II stretch occupies residues 62-139 (TVKERNLFQK…GDFSKNIAPM (78 aa)). The flexible linker stretch occupies residues 139–143 (MKNLL). A domain III region spans residues 144-194 (ENSAELDDALAALVALGFSSKEVNKINPKLASLGELTTDAYIQKGLKLLTK).

It belongs to the RuvA family. As to quaternary structure, homotetramer. Forms an RuvA(8)-RuvB(12)-Holliday junction (HJ) complex. HJ DNA is sandwiched between 2 RuvA tetramers; dsDNA enters through RuvA and exits via RuvB. An RuvB hexamer assembles on each DNA strand where it exits the tetramer. Each RuvB hexamer is contacted by two RuvA subunits (via domain III) on 2 adjacent RuvB subunits; this complex drives branch migration. In the full resolvosome a probable DNA-RuvA(4)-RuvB(12)-RuvC(2) complex forms which resolves the HJ.

It is found in the cytoplasm. Its function is as follows. The RuvA-RuvB-RuvC complex processes Holliday junction (HJ) DNA during genetic recombination and DNA repair, while the RuvA-RuvB complex plays an important role in the rescue of blocked DNA replication forks via replication fork reversal (RFR). RuvA specifically binds to HJ cruciform DNA, conferring on it an open structure. The RuvB hexamer acts as an ATP-dependent pump, pulling dsDNA into and through the RuvAB complex. HJ branch migration allows RuvC to scan DNA until it finds its consensus sequence, where it cleaves and resolves the cruciform DNA. The protein is Holliday junction branch migration complex subunit RuvA of Oenococcus oeni (strain ATCC BAA-331 / PSU-1).